We begin with the raw amino-acid sequence, 106 residues long: UPF0145 protein CTC_01500 (106 aa).

The protein belongs to the UPF0145 family.

The chain is UPF0145 protein CTC_01500 from Clostridium tetani (strain Massachusetts / E88).